An 88-amino-acid polypeptide reads, in one-letter code: Small ribosomal subunit protein uS15c (88 aa).

Belongs to the universal ribosomal protein uS15 family. As to quaternary structure, part of the 30S ribosomal subunit.

It is found in the plastid. Its subcellular location is the chloroplast. The sequence is that of Small ribosomal subunit protein uS15c (rps15) from Pinus koraiensis (Korean pine).